A 272-amino-acid polypeptide reads, in one-letter code: Catabolic 3-dehydroquinate dehydratase (272 aa).

3-dehydroquinate is bound by residues 66-68 (EFR) and Arg102. Residue His163 is the Proton donor/acceptor of the active site. Residue Lys190 is the Schiff-base intermediate with substrate of the active site. 3-dehydroquinate-binding residues include Arg232, Ser251, and Gln255.

Belongs to the type-I 3-dehydroquinase family.

The enzyme catalyses 3-dehydroquinate = 3-dehydroshikimate + H2O. It participates in aromatic compound metabolism; 3,4-dihydroxybenzoate biosynthesis; 3,4-dihydroxybenzoate from 3-dehydroquinate: step 1/2. In terms of biological role, involved in the biosynthesis of protocatechuate. Catalyzes the catabolic dehydration of 3-dehydroquinate (DHQ) to yield 3-dehydroshikimate. This is Catabolic 3-dehydroquinate dehydratase from Acinetobacter baylyi (strain ATCC 33305 / BD413 / ADP1).